We begin with the raw amino-acid sequence, 33 residues long: Pardaxin P-5 (33 aa).

Belongs to the pardaxin family. Monomer. In aqueous solution exists as a tetramer.

The protein resides in the secreted. It is found in the target cell membrane. Exhibits unusual shark repellent and surfactant properties. Forms voltage-dependent, ion-permeable channels in membranes. At high concentration causes cell membrane lysis. The protein is Pardaxin P-5 of Pardachirus marmoratus (Finless sole).